The following is a 95-amino-acid chain: MSYQKHQQKWQLPAKCLPKYPSKWTPQAPASCPAPCPPPAPSCCVSSCCISGFGGHCSLVSLRFPRFYLRQPQHSDCCEHESSRCSTCYSSGDCS.

Belongs to the LCE family.

Precursors of the cornified envelope of the stratum corneum. The sequence is that of Late cornified envelope protein 7A from Homo sapiens (Human).